A 130-amino-acid polypeptide reads, in one-letter code: Small ribosomal subunit protein uS9 (130 aa).

It belongs to the universal ribosomal protein uS9 family.

The protein is Small ribosomal subunit protein uS9 of Carboxydothermus hydrogenoformans (strain ATCC BAA-161 / DSM 6008 / Z-2901).